Consider the following 831-residue polypeptide: Translation initiation factor IF-2 (831 aa).

Residues 116–157 form a disordered region; that stretch reads IEPLETDKEVEQKQQNTEENKVEVSAKIVQDDEDIPSQIPKK. A compositionally biased stretch (basic and acidic residues) spans 117–139; it reads EPLETDKEVEQKQQNTEENKVEV. Residues 329 to 499 enclose the tr-type G domain; that stretch reads TRAPVVTVMG…LLIAEMQDLK (171 aa). The segment at 338–345 is G1; the sequence is GHVDHGKT. Position 338–345 (338–345) interacts with GTP; that stretch reads GHVDHGKT. The tract at residues 363–367 is G2; the sequence is GITQH. The interval 385-388 is G3; the sequence is DTPG. GTP is bound by residues 385–389 and 439–442; these read DTPGH and NKID. Positions 439–442 are G4; that stretch reads NKID. The tract at residues 475 to 477 is G5; the sequence is SAL.

This sequence belongs to the TRAFAC class translation factor GTPase superfamily. Classic translation factor GTPase family. IF-2 subfamily.

The protein localises to the cytoplasm. One of the essential components for the initiation of protein synthesis. Protects formylmethionyl-tRNA from spontaneous hydrolysis and promotes its binding to the 30S ribosomal subunits. Also involved in the hydrolysis of GTP during the formation of the 70S ribosomal complex. The polypeptide is Translation initiation factor IF-2 (Rickettsia conorii (strain ATCC VR-613 / Malish 7)).